An 86-amino-acid chain; its full sequence is Neurotoxin LmNaTx34.2 (86 aa).

Positions 1 to 18 (MKTLILVVIALMVIEVKS) are cleaved as a signal peptide. One can recognise an LCN-type CS-alpha/beta domain in the interval 19–85 (DGYLMVRAGR…IWTYEKNTCS (67 aa)). Intrachain disulfides connect C32-C84, C36-C57, C43-C64, and C47-C66.

The protein belongs to the long (4 C-C) scorpion toxin superfamily. Sodium channel inhibitor family. Beta subfamily. As to expression, expressed by the venom gland.

It is found in the secreted. In terms of biological role, binds voltage-independently at site-4 of sodium channels (Nav) and shift the voltage of activation toward more negative potentials thereby affecting sodium channel activation and promoting spontaneous and repetitive firing. The chain is Neurotoxin LmNaTx34.2 from Lychas mucronatus (Chinese swimming scorpion).